Consider the following 163-residue polypeptide: Phosphopantetheine adenylyltransferase (163 aa).

Position 9 (Thr-9) interacts with substrate. ATP contacts are provided by residues 9-10 (TF) and His-17. Substrate-binding residues include Lys-41, Leu-73, and Arg-87. Residues 88-90 (GLR), Glu-98, and 123-129 (YQFISGT) each bind ATP.

The protein belongs to the bacterial CoaD family. As to quaternary structure, homohexamer. The cofactor is Mg(2+).

It is found in the cytoplasm. It carries out the reaction (R)-4'-phosphopantetheine + ATP + H(+) = 3'-dephospho-CoA + diphosphate. Its pathway is cofactor biosynthesis; coenzyme A biosynthesis; CoA from (R)-pantothenate: step 4/5. Reversibly transfers an adenylyl group from ATP to 4'-phosphopantetheine, yielding dephospho-CoA (dPCoA) and pyrophosphate. The chain is Phosphopantetheine adenylyltransferase from Herminiimonas arsenicoxydans.